A 435-amino-acid polypeptide reads, in one-letter code: Elongation factor 1-alpha (435 aa).

In terms of domain architecture, tr-type G spans 5-226; that stretch reads KTHINLVVIG…DTMEPPKRPT (222 aa). Residues 14–21 are G1; it reads GHVDSGKS. Position 14–21 (14–21) interacts with GTP; sequence GHVDSGKS. The tract at residues 70–74 is G2; the sequence is GITID. Positions 91–94 are G3; that stretch reads DAPG. Residues 91–95 and 151–154 contribute to the GTP site; these read DAPGH and NKMD. Residues 151–154 form a G4 region; sequence NKMD. The interval 190-192 is G5; it reads SGF.

The protein belongs to the TRAFAC class translation factor GTPase superfamily. Classic translation factor GTPase family. EF-Tu/EF-1A subfamily.

The protein resides in the cytoplasm. This protein promotes the GTP-dependent binding of aminoacyl-tRNA to the A-site of ribosomes during protein biosynthesis. This chain is Elongation factor 1-alpha, found in Cryptosporidium parvum.